The sequence spans 102 residues: Cytochrome c (102 aa).

Gly1 carries the post-translational modification N-acetylglycine. The segment covering Gly1–Glu11 has biased composition (basic and acidic residues). Residues Gly1–Ser26 form a disordered region. Cys17, His18, and Met79 together coordinate heme c. Polar residues predominate over residues Cys17–Ser26. Lys85 carries the N6,N6,N6-trimethyllysine modification.

This sequence belongs to the cytochrome c family. Post-translationally, binds 1 heme c group covalently per subunit.

The protein resides in the mitochondrion intermembrane space. Functionally, electron carrier protein. The oxidized form of the cytochrome c heme group can accept an electron from the heme group of the cytochrome c1 subunit of cytochrome reductase. Cytochrome c then transfers this electron to the cytochrome oxidase complex, the final protein carrier in the mitochondrial electron-transport chain. This Euglena viridis (Cercaria viridis) protein is Cytochrome c.